Reading from the N-terminus, the 115-residue chain is Large ribosomal subunit protein bL20c (115 aa).

Belongs to the bacterial ribosomal protein bL20 family.

The protein resides in the plastid. Its subcellular location is the chloroplast. In terms of biological role, binds directly to 23S ribosomal RNA and is necessary for the in vitro assembly process of the 50S ribosomal subunit. It is not involved in the protein synthesizing functions of that subunit. The protein is Large ribosomal subunit protein bL20c of Physcomitrium patens (Spreading-leaved earth moss).